Reading from the N-terminus, the 319-residue chain is Ankyrin repeat domain-containing protein 1 (319 aa).

The stretch at 63-89 (EKEREAELKKKKLEQRSKLENLEDLEI) forms a coiled coil. 5 ANK repeats span residues 152 to 181 (YKRT…QIEF), 185 to 214 (LEST…KISA), 218 to 247 (LLST…DLNA), 251 to 280 (EGDT…DLNV), and 284 to 315 (AGKT…KASR).

Interacts with TTN/titin and YBX1. In terms of tissue distribution, expressed in heart. In postnatal neonatal heart, it is expressed in an asymmetrical way; left ventricle favored towards right ventricle. Whether or not this could be correlated with a hypertrophic heart is still a matter of debate. Levels increase gradually from newborn to adult.

It is found in the nucleus. Functionally, may play an important role in endothelial cell activation. May act as a nuclear transcription factor that negatively regulates the expression of cardiac genes. This chain is Ankyrin repeat domain-containing protein 1 (ANKRD1), found in Sus scrofa (Pig).